Here is a 449-residue protein sequence, read N- to C-terminus: Sensor protein QseC (449 aa).

Residues Met-1–Arg-12 are Cytoplasmic-facing. A helical transmembrane segment spans residues Leu-13 to Trp-33. The Periplasmic portion of the chain corresponds to Arg-34–Ala-161. The helical transmembrane segment at Ala-162 to Leu-182 threads the bilayer. An HAMP domain is found at His-183–Val-235. The Cytoplasmic segment spans residues His-183 to Trp-449. Positions Asp-243 to Trp-449 constitute a Histidine kinase domain. His-246 is subject to Phosphohistidine; by autocatalysis.

The protein resides in the cell inner membrane. It carries out the reaction ATP + protein L-histidine = ADP + protein N-phospho-L-histidine.. Its function is as follows. Member of a two-component regulatory system QseB/QseC. Activates the flagella regulon by activating transcription of FlhDC. May activate QseB by phosphorylation. The protein is Sensor protein QseC (qseC) of Salmonella typhi.